Here is a 101-residue protein sequence, read N- to C-terminus: MAKKSAVNRNLAVKALVKQYASKRVALKAIANDESLPLEERFEARLKLAKLPRSSSAVRIRNRCEVTGRPRAYYRKLKMSRIALRELGSSGQIPGLVKSSW.

The protein belongs to the universal ribosomal protein uS14 family. Part of the 30S ribosomal subunit. Contacts proteins S3 and S10.

In terms of biological role, binds 16S rRNA, required for the assembly of 30S particles and may also be responsible for determining the conformation of the 16S rRNA at the A site. The protein is Small ribosomal subunit protein uS14 of Caulobacter sp. (strain K31).